Consider the following 450-residue polypeptide: Cysteine proteinase (450 aa).

A signal peptide spans 1 to 20; the sequence is MPRTEMVRFVRLPVVLLAMA. A propeptide spans 21–125 (activation peptide); sequence ACLASVALGS…RKTVNVTTGR (105 aa). A glycan (N-linked (GlcNAc...) asparagine) is linked at Asn-120. Cys-147 and Cys-188 form a disulfide bridge. Active-site residues include Cys-150, His-287, and Asn-307. The tract at residues 343-450 is 108-residue extension; the sequence is TPPPPPPPPP…TKAARLVPHQ (108 aa). Asn-397 is a glycosylation site (N-linked (GlcNAc...) asparagine).

Belongs to the peptidase C1 family.

It localises to the lysosome. In terms of biological role, the cysteine proteinases have a potential role in host-parasite interaction and virulence. This Trypanosoma brucei brucei protein is Cysteine proteinase.